Here is a 407-residue protein sequence, read N- to C-terminus: 5-aminolevulinate synthase 1 (407 aa).

Substrate contacts are provided by R21, S137, and K156. The pyridoxal 5'-phosphate site is built by S189, H217, and T245. K248 is an active-site residue. At K248 the chain carries N6-(pyridoxal phosphate)lysine. 2 residues coordinate pyridoxal 5'-phosphate: S277 and T278. T363 serves as a coordination point for substrate.

This sequence belongs to the class-II pyridoxal-phosphate-dependent aminotransferase family. As to quaternary structure, homodimer. The cofactor is pyridoxal 5'-phosphate.

It catalyses the reaction succinyl-CoA + glycine + H(+) = 5-aminolevulinate + CO2 + CoA. It functions in the pathway porphyrin-containing compound metabolism; protoporphyrin-IX biosynthesis; 5-aminolevulinate from glycine: step 1/1. The protein is 5-aminolevulinate synthase 1 (hemA) of Cereibacter sphaeroides (strain ATCC 17023 / DSM 158 / JCM 6121 / CCUG 31486 / LMG 2827 / NBRC 12203 / NCIMB 8253 / ATH 2.4.1.) (Rhodobacter sphaeroides).